A 283-amino-acid chain; its full sequence is Foldase protein PrsA 3 (283 aa).

The signal sequence occupies residues 1–21 (MKKKKIFIGTIISCVMLALSA). Cys-22 is lipidated: N-palmitoyl cysteine. Cys-22 is lipidated: S-diacylglycerol cysteine. Residues 132–222 (KPEMKVSHIL…YGYHIIKVTD (91 aa)) form the PpiC domain.

The protein belongs to the PrsA family.

It is found in the cell membrane. It catalyses the reaction [protein]-peptidylproline (omega=180) = [protein]-peptidylproline (omega=0). In terms of biological role, plays a major role in protein secretion by helping the post-translocational extracellular folding of several secreted proteins. The sequence is that of Foldase protein PrsA 3 (prsA3) from Bacillus cereus (strain ATCC 14579 / DSM 31 / CCUG 7414 / JCM 2152 / NBRC 15305 / NCIMB 9373 / NCTC 2599 / NRRL B-3711).